The chain runs to 90 residues: Lantipeptide prochlorosin 1.7 (90 aa).

Positions 1–68 are excised as a propeptide; that stretch reads MSEEQLKAFI…DAELEGVAGG (68 aa). 2,3-didehydrobutyrine is present on residues threonine 69 and threonine 73. Positions 76–79 form a cross-link, lanthionine (Ser-Cys); sequence SITC. Cross-links (beta-methyllanthionine (Thr-Cys)) lie at residues 78 to 82 and 81 to 90; these read TCETC and TCDLLVGKMC.

In terms of processing, cross-links are proved in vitro, when coepressed in E.coli with the ProcM lanthionine synthetase. The lanthionine residue has a DL configuration (with 2S,6R stereochemistry), whereas the beta-methyllanthionine residues have a DL configuration (with 2S,3S,6R stereochemistry). Post-translationally, maturation of prochlorosin involves the enzymatic conversion of Thr, and Ser into dehydrated AA and the formation of thioether bonds with cysteines. This is followed by membrane translocation and cleavage of the modified precursor.

It is found in the secreted. Lanthionine-containing peptide (lantipeptide) with unknown function. Does not show antibiotic activity against Lactococcus lactis 117 and Bacillus subtilis 6633 bacteria. Organisms that produce this peptide live in oligotrophic environments at very dilute concentrations, suggesting this peptide is not secreted to influence other bacteria. This chain is Lantipeptide prochlorosin 1.7, found in Prochlorococcus marinus (strain MIT 9313).